A 202-amino-acid polypeptide reads, in one-letter code: Pectinesterase inhibitor 11 (202 aa).

Residues 1–21 (MAKQIFYTLFLFLLSTAILTA) form the signal peptide. Cys-43 and Cys-52 form a disulfide bridge. N-linked (GlcNAc...) asparagine glycosylation is present at Asn-76. Cysteines 109 and 160 form a disulfide.

This sequence belongs to the PMEI family.

It is found in the secreted. It localises to the extracellular space. Its subcellular location is the apoplast. Its function is as follows. Pectin methylesterase (PME) inhibitor involved in the maintenance of cell wall integrity in response to necrotrophic pathogens. Modulates PME activity and pectin methylesterification during infection by Botrytis cinerea and contributes to resistance against the pathogen. In Arabidopsis thaliana (Mouse-ear cress), this protein is Pectinesterase inhibitor 11.